The primary structure comprises 1145 residues: Probable ATP-dependent RNA helicase DHX34 (1145 aa).

Basic and acidic residues predominate over residues 1-14; sequence MPPPRTREGRGHRD. The tract at residues 1–27 is disordered; sequence MPPPRTREGRGHRDRDHHRAPREEEAP. One can recognise a Helicase ATP-binding domain in the interval 174–334; it reads LQTLKEHQVV…FSHAPVVQVP (161 aa). 187-194 lines the ATP pocket; that stretch reads GDTGCGKS. The DEAH box motif lies at 281-284; that stretch reads DEVH. Residues 370–538 enclose the Helicase C-terminal domain; that stretch reads AIDNKYPPEE…ALVLQMKSMS (169 aa). Disordered stretches follow at residues 726–764 and 1091–1114; these read LKRQ…QRAD and NTCP…PQKT. A phosphoserine mark is found at S749 and S750.

The protein belongs to the DEAD box helicase family. DEAH subfamily. In terms of assembly, forms a complex with RUVBL1 and RUVBL2. Part of a complex composed of SMG1, DHX34 and UPF1; within the complex DHX34 acts as a scaffolding protein to facilitate SMG1 phosphorylation of UPF1. Interacts with UPF1, MOV10, EIF4A3, XRN2, SMG6, SMG7, SMG9, UPF3A, UPF3B, CASC3/MLN51, XRN1, DIS3 and DCP1A; the interactions are RNA-independent. Interacts with NCBP1/CPB80; the interaction is RNA-dependent. Interacts (via C-terminus) with SMG1; the interaction is RNA-independent.

The catalysed reaction is ATP + H2O = ADP + phosphate + H(+). Its function is as follows. Probable ATP-binding RNA helicase. Required for nonsense-mediated decay (NMD) degradation of mRNA transcripts containing premature stop codons. Promotes the phosphorylation of UPF1 along with its interaction with key NMD pathway proteins UPF2 and EIF4A3. Negatively regulates the nucleotide binding ability and ATP hydrolysis of the RUVBL1-RUVBL2 complex via induction of N-terminus conformation changes of the RUVBL2 subunits. The sequence is that of Probable ATP-dependent RNA helicase DHX34 from Mus musculus (Mouse).